Reading from the N-terminus, the 255-residue chain is Ribosome maturation factor RimP (255 aa).

The segment at 177-255 (LRRGSAPPQD…ARLKNRDTLH (79 aa)) is disordered. Over residues 186–202 (DGEDVDEEAGEAPEDEV) the composition is skewed to acidic residues. The span at 216–230 (PKMDKKSDKKSDKPV) shows a compositional bias: basic and acidic residues.

This sequence belongs to the RimP family.

The protein localises to the cytoplasm. In terms of biological role, required for maturation of 30S ribosomal subunits. This Methylorubrum populi (strain ATCC BAA-705 / NCIMB 13946 / BJ001) (Methylobacterium populi) protein is Ribosome maturation factor RimP.